The sequence spans 170 residues: Shikimate kinase (170 aa).

15–20 (GTGKTT) serves as a coordination point for ATP. Thr19 is a binding site for Mg(2+). Asp37, Arg61, and Gly82 together coordinate substrate. Arg120 provides a ligand contact to ATP. Arg138 lines the substrate pocket. Gln154 is a binding site for ATP.

This sequence belongs to the shikimate kinase family. Monomer. Mg(2+) serves as cofactor.

It is found in the cytoplasm. It carries out the reaction shikimate + ATP = 3-phosphoshikimate + ADP + H(+). The protein operates within metabolic intermediate biosynthesis; chorismate biosynthesis; chorismate from D-erythrose 4-phosphate and phosphoenolpyruvate: step 5/7. Catalyzes the specific phosphorylation of the 3-hydroxyl group of shikimic acid using ATP as a cosubstrate. The polypeptide is Shikimate kinase (Staphylococcus epidermidis (strain ATCC 35984 / DSM 28319 / BCRC 17069 / CCUG 31568 / BM 3577 / RP62A)).